Reading from the N-terminus, the 451-residue chain is Prenyltransferase asqH1 (451 aa).

Residues 14-37 are disordered; that stretch reads AEDQSTRKVHWGQEGSGQSPEARP. Glu-120 contributes to the L-tryptophan binding site. Residues Arg-137, Arg-274, Lys-276, Tyr-278, and Tyr-373 each coordinate substrate.

It belongs to the tryptophan dimethylallyltransferase family.

The enzyme catalyses quinolinone B + dimethylallyl diphosphate = peniprequinolone + diphosphate. It participates in secondary metabolite biosynthesis. Its pathway is alkaloid biosynthesis. The protein operates within mycotoxin biosynthesis. Its function is as follows. Prenyltransferase; part of the gene cluster that mediates the biosynthesis of the aspoquinolone mycotoxins. Within the pathway, the prenyltransferase asqH1 catalyzes the canonical Friedel-Crafts alkylation of quinolinone B with dimethylallyl cation to yield dimethylallyl quinolone. The first step of the pathway is catalyzed by the nonribosomal peptide synthetase asqK that condenses anthranilic acid and O-methyl-L-tyrosine to produce 4'-methoxycyclopeptin. 4'-methoxycyclopeptin is then converted to 4'-methoxydehydrocyclopeptin by the ketoglutarate-dependent dioxygenase asqJ. AsqJ also converts its first product 4'-methoxydehydrocyclopeptin to 4'-methoxycyclopenin. The following conversion of 4'-methoxycyclopenin into 4'-methoxyviridicatin is catalyzed by the cyclopenase asqI. 4'-methoxyviridicatin is the precursor of quinolone natural products, and is further converted to quinolinone B. The prenyltransferase asqH1 then catalyzes the canonical Friedel-Crafts alkylation of quinolinone B with dimethylallyl cation to yield dimethylallyl quinolone, which is subjected to FAD-dependent dehydrogenation by the FAD-linked oxidoreductase asqF to yield conjugated aryl diene. The delta(3') double bond then serves as the site of the second alkylation with DMAPP catalyzed by the prenyltransferase asqH2 to yield a carbenium ion intermediate, which can be attacked by H(2)O to yield a styrenyl quinolone containing a C3'-hydroxyprenyl chain. The FAD-dependent monooxygenase asqG performs epoxidation of the terminal C7'-C8' olefin. Finally, after dehydratation of the epoxide at C3 by asqC, the quinolone epoxide rearrangement protein asqO catalyzes an enzymatic 3-exo-tet cyclization to yield the cyclopropyl-THF ring system in aspoquinolone. The chain is Prenyltransferase asqH1 from Emericella nidulans (strain FGSC A4 / ATCC 38163 / CBS 112.46 / NRRL 194 / M139) (Aspergillus nidulans).